A 311-amino-acid polypeptide reads, in one-letter code: Ribosomal RNA small subunit methyltransferase H (311 aa).

Residues Gly-41 to His-43, Asp-61, Phe-85, Asp-102, and Gln-109 each bind S-adenosyl-L-methionine.

This sequence belongs to the methyltransferase superfamily. RsmH family.

Its subcellular location is the cytoplasm. It carries out the reaction cytidine(1402) in 16S rRNA + S-adenosyl-L-methionine = N(4)-methylcytidine(1402) in 16S rRNA + S-adenosyl-L-homocysteine + H(+). Functionally, specifically methylates the N4 position of cytidine in position 1402 (C1402) of 16S rRNA. The sequence is that of Ribosomal RNA small subunit methyltransferase H from Paracidovorax citrulli (strain AAC00-1) (Acidovorax citrulli).